A 274-amino-acid chain; its full sequence is Shikimate dehydrogenase (NADP(+)) (274 aa).

Residues 14 to 16 and Thr-61 contribute to the shikimate site; that span reads SKS. The active-site Proton acceptor is the Lys-65. Shikimate-binding residues include Asn-86 and Asp-102. Residues 126–130, 150–155, and Met-214 contribute to the NADP(+) site; these read GAGGA and NRTAEK. Tyr-216 lines the shikimate pocket. An NADP(+)-binding site is contributed by Gly-239.

It belongs to the shikimate dehydrogenase family. Homodimer.

The enzyme catalyses shikimate + NADP(+) = 3-dehydroshikimate + NADPH + H(+). The protein operates within metabolic intermediate biosynthesis; chorismate biosynthesis; chorismate from D-erythrose 4-phosphate and phosphoenolpyruvate: step 4/7. Involved in the biosynthesis of the chorismate, which leads to the biosynthesis of aromatic amino acids. Catalyzes the reversible NADPH linked reduction of 3-dehydroshikimate (DHSA) to yield shikimate (SA). The polypeptide is Shikimate dehydrogenase (NADP(+)) (Pseudoalteromonas translucida (strain TAC 125)).